A 252-amino-acid polypeptide reads, in one-letter code: Triosephosphate isomerase (252 aa).

10–12 (NWK) contributes to the substrate binding site. The active-site Electrophile is the histidine 96. Catalysis depends on glutamate 168, which acts as the Proton acceptor. Residues glycine 174, serine 213, and 234 to 235 (GG) each bind substrate.

The protein belongs to the triosephosphate isomerase family. Homodimer.

It localises to the cytoplasm. It carries out the reaction D-glyceraldehyde 3-phosphate = dihydroxyacetone phosphate. It functions in the pathway carbohydrate biosynthesis; gluconeogenesis. Its pathway is carbohydrate degradation; glycolysis; D-glyceraldehyde 3-phosphate from glycerone phosphate: step 1/1. In terms of biological role, involved in the gluconeogenesis. Catalyzes stereospecifically the conversion of dihydroxyacetone phosphate (DHAP) to D-glyceraldehyde-3-phosphate (G3P). The chain is Triosephosphate isomerase from Nitrosomonas eutropha (strain DSM 101675 / C91 / Nm57).